Here is a 191-residue protein sequence, read N- to C-terminus: Elongation factor P-like protein (191 aa).

Belongs to the elongation factor P family.

The polypeptide is Elongation factor P-like protein (Photobacterium profundum (strain SS9)).